We begin with the raw amino-acid sequence, 657 residues long: Glycogen debranching enzyme (657 aa).

Asp-336 serves as the catalytic Nucleophile. Glu-371 functions as the Proton donor in the catalytic mechanism. A disordered region spans residues 460–479 (ANGEENRDGTNNNYSNNHGK).

It belongs to the glycosyl hydrolase 13 family.

The catalysed reaction is Hydrolysis of (1-&gt;6)-alpha-D-glucosidic linkages to branches with degrees of polymerization of three or four glucose residues in limit dextrin.. It functions in the pathway glycan degradation; glycogen degradation. Removes maltotriose and maltotetraose chains that are attached by 1,6-alpha-linkage to the limit dextrin main chain, generating a debranched limit dextrin. This is Glycogen debranching enzyme from Escherichia coli O127:H6 (strain E2348/69 / EPEC).